Here is a 258-residue protein sequence, read N- to C-terminus: 4-hydroxy-2-oxovalerate aldolase (258 aa).

His-48 acts as the Proton acceptor in catalysis. Residue Gln-149 coordinates substrate. Glu-151 contributes to the Mg(2+) binding site. Residues Ala-176 and Asp-177 each contribute to the substrate site. Asp-177 contacts Mg(2+).

Belongs to the HpcH/HpaI aldolase family.

It carries out the reaction (S)-4-hydroxy-2-oxopentanoate = acetaldehyde + pyruvate. It participates in xenobiotic degradation; biphenyl degradation. Functionally, catalyzes the reversible retro-aldol cleavage of 4-hydroxy-2-oxovalerate to pyruvate and acetaldehyde. This is 4-hydroxy-2-oxovalerate aldolase (bphF) from Rhodococcus jostii (strain RHA1).